We begin with the raw amino-acid sequence, 427 residues long: Probable protein phosphatase 2C 64 (427 aa).

The tract at residues 1 to 36 (MGNCVARSGTAVDAGGDGGEDGKRRRRRWKAPREDQ) is disordered. The PPM-type phosphatase domain maps to 53-331 (TATVYTQQGR…DDCAVVCLYL (279 aa)). Residues Asp89, Gly90, Asp276, and Asp322 each contribute to the Mn(2+) site.

It belongs to the PP2C family. Requires Mg(2+) as cofactor. Mn(2+) is required as a cofactor.

It catalyses the reaction O-phospho-L-seryl-[protein] + H2O = L-seryl-[protein] + phosphate. The enzyme catalyses O-phospho-L-threonyl-[protein] + H2O = L-threonyl-[protein] + phosphate. The chain is Probable protein phosphatase 2C 64 from Oryza sativa subsp. japonica (Rice).